The chain runs to 162 residues: Caveolin-2 (162 aa).

Residues 1 to 86 (MGLETEKADV…FEISKYVMYK (86 aa)) are Cytoplasmic-facing. Residue Y19 is modified to Phosphotyrosine; by SRC. S20 and S23 each carry phosphoserine. Y27 is subject to Phosphotyrosine; by SRC. S36 bears the Phosphoserine mark. Positions 87 to 107 (FLTVFLAIPLAFIAGILFATL) form an intramembrane region, helical. Residues 108–162 (SCLHIWILMPFVKTCLMVLPSVQTIWKSVTDVIIAPLCTSVGRCFSSVSLQLSQD) lie on the Cytoplasmic side of the membrane.

This sequence belongs to the caveolin family. Monomer or homodimer. Interacts with CAV1; the interaction forms a stable heterooligomeric complex that is required for targeting to lipid rafts and for caveolae formation. Tyrosine phosphorylated forms do not form heterooligomers with the Tyr-19-phosphorylated form existing as a monomer or dimer, and the Tyr-27-form as a monomer only. Interacts (tyrosine phosphorylated form) with the SH2 domain-containing proteins, RASA1, NCK1 and SRC. Interacts (tyrosine phosphorylated form) with INSR, the interaction (Tyr-27-phosphorylated form) is increased on insulin stimulation. Interacts (Tyr-19 phosphorylated form) with MAPK1 (phosphorylated form); the interaction, promoted by insulin, leads to nuclear location and MAPK1 activation. Interacts with STAT3; the interaction is increased on insulin-induced tyrosine phosphorylation leading to STAT activation. Phosphorylated on serine and tyrosine residues. CAV1 promotes phosphorylation on Ser-23 which then targets the complex to the plasma membrane, lipid rafts and caveolae. Phosphorylation on Ser-36 appears to modulate mitosis in endothelial cells. Phosphorylation on both Tyr-19 and Tyr-27 is required for insulin-induced 'Ser-727' phosphorylation of STAT3 and its activation. Phosphorylation on Tyr-19 is required for insulin-induced phosphorylation of MAPK1 and DNA binding of STAT3. Tyrosine phosphorylation is induced by both EGF and insulin (By. similarity).

It localises to the nucleus. The protein localises to the cytoplasm. The protein resides in the golgi apparatus membrane. Its subcellular location is the cell membrane. It is found in the membrane. It localises to the caveola. Its function is as follows. May act as a scaffolding protein within caveolar membranes. Interacts directly with G-protein alpha subunits and can functionally regulate their activity. Acts as an accessory protein in conjunction with CAV1 in targeting to lipid rafts and driving caveolae formation. The Ser-36 phosphorylated form has a role in modulating mitosis in endothelial cells. Positive regulator of cellular mitogenesis of the MAPK signaling pathway. Required for the insulin-stimulated nuclear translocation and activation of MAPK1 and STAT3, and the subsequent regulation of cell cycle progression. The chain is Caveolin-2 (CAV2) from Pan troglodytes (Chimpanzee).